Here is an 84-residue protein sequence, read N- to C-terminus: MKYFVIALALAVALVCIAESTAYEVNEELENELDDLDDAAWLAVAEELQGLEDFEESRGLFGKLIKKFGRKAISYAVKKARGKH.

The first 22 residues, 1–22, serve as a signal peptide directing secretion; the sequence is MKYFVIALALAVALVCIAESTA. A propeptide spanning residues 23–58 is cleaved from the precursor; sequence YEVNEELENELDDLDDAAWLAVAEELQGLEDFEESR. The Processing quadruplet motif motif lies at 55 to 58; sequence EESR.

Post-translationally, cleavage of the propeptide depends on the processing quadruplet motif (XXXR, with at least one of X being E). As to expression, expressed by the venom gland.

It localises to the secreted. It has antimicrobial activity against Gram-positive bacteria (A.globiformis VKM Ac-1112 (MIC=0.7 uM), and B.subtilis VKM B-501 (MIC=0.4 uM)), Gram-negative bacteria (E.coli DH5-alpha (MIC=1.0 uM), E.coli MH1 (MIC=0.7 uM), and P.aeruginosa PAO1 (MIC=6.7 uM)), and yeasts (P.pastoris GS115 (MIC=6.7 uM), and S.cerevisiae Y190 (MIC=54 uM)). Also has a strong hemolytic activity against rabbit erythrocytes. Causes paralysis, but is not lethal when injected into insect (M.domestica) larvae. This is M-zodatoxin-Lt2a from Lachesana tarabaevi (Spider).